The sequence spans 424 residues: MSNTQSFFSQSLAERDAPIRSSLLKELERQQSQVELIASENIVSRAVLEAQGSVLTNKYAEGYPGKRYYGGCEYADEVESLAIDRVKQLFNAGFANVQPHSGAQANGAVMLALTKPGDTVLGMSLDAGGHLTHGAKPALSGKWFNAMQYGVNRDTMLIDYEQVEKLAQEHKPSLIIAGFSAYPRKLDFARFRAIADSVGAKLMVDMAHIAGVIAAGRHDNPVDHAHVVTSTTHKTLRGPRGGFVLTNDEEIAKKINSAVFPGLQGGPLMHVIAGKAVAFGEALKPEFKTYIDSVLANAKALGEVLKAGGVDLVTGGTDNHLLLVDLRPKGLKGTQVEQALERAGITCNKNGIPFDTEKPTITSGIRLGTPAATTRGFGVAEFEQIGRLILEVFEALRANPDGDRATEHRVRSEIFALCDRFPIY.

Residues leucine 125 and 129 to 131 (GHL) each bind (6S)-5,6,7,8-tetrahydrofolate. An N6-(pyridoxal phosphate)lysine modification is found at lysine 234. Residue glutamate 250 participates in (6S)-5,6,7,8-tetrahydrofolate binding.

Belongs to the SHMT family. As to quaternary structure, homodimer. Pyridoxal 5'-phosphate serves as cofactor.

It localises to the cytoplasm. It carries out the reaction (6R)-5,10-methylene-5,6,7,8-tetrahydrofolate + glycine + H2O = (6S)-5,6,7,8-tetrahydrofolate + L-serine. The protein operates within one-carbon metabolism; tetrahydrofolate interconversion. It participates in amino-acid biosynthesis; glycine biosynthesis; glycine from L-serine: step 1/1. Its function is as follows. Catalyzes the reversible interconversion of serine and glycine with tetrahydrofolate (THF) serving as the one-carbon carrier. This reaction serves as the major source of one-carbon groups required for the biosynthesis of purines, thymidylate, methionine, and other important biomolecules. Also exhibits THF-independent aldolase activity toward beta-hydroxyamino acids, producing glycine and aldehydes, via a retro-aldol mechanism. The sequence is that of Serine hydroxymethyltransferase 2 from Ralstonia nicotianae (strain ATCC BAA-1114 / GMI1000) (Ralstonia solanacearum).